Reading from the N-terminus, the 466-residue chain is UDP-glycosyltransferase 79 (466 aa).

Catalysis depends on histidine 27, which acts as the Proton acceptor. Histidine 27 serves as a coordination point for UDP-alpha-D-glucose. Aspartate 120 functions as the Charge relay in the catalytic mechanism. Positions 142, 291, 343, 344, 361, 364, 365, 366, 369, 385, and 386 each coordinate UDP-alpha-D-glucose. 4 residues coordinate UDP: threonine 291, phenylalanine 343, cysteine 344, and histidine 361. 3 residues coordinate UDP: asparagine 365, serine 366, and glutamate 369.

The protein belongs to the UDP-glycosyltransferase family.

In terms of biological role, involved in the detoxification of the Fusarium mycotoxin deoxynivalenol by the transfer of glucose from UDP-D-glucose to the hydroxyl group at C-3, forming deoxynivalenol-3-O-beta-D-glucoside. This is UDP-glycosyltransferase 79 from Oryza sativa subsp. japonica (Rice).